We begin with the raw amino-acid sequence, 495 residues long: NADH-ubiquinone oxidoreductase chain 4 (495 aa).

14 helical membrane-spanning segments follow: residues 9-29, 37-57, 89-109, 118-138, 139-159, 173-193, 214-234, 245-265, 272-292, 307-327, 335-355, 367-387, 413-433, and 457-477; these read YSNL…ILVI, IRGI…FFWI, ISLF…LVGF, EYMI…CSLD, LLIF…IIGV, FFLY…FIFF, ILLW…VPVH, PTAG…YGFL, FPEA…IAII, IIAY…FSLN, ILLM…VGAL, YGGL…FTLA, LVAT…LWLY, and VLIF…PEVF.

The protein belongs to the complex I subunit 4 family.

The protein localises to the mitochondrion membrane. The enzyme catalyses a ubiquinone + NADH + 5 H(+)(in) = a ubiquinol + NAD(+) + 4 H(+)(out). Its function is as follows. Core subunit of the mitochondrial membrane respiratory chain NADH dehydrogenase (Complex I) that is believed to belong to the minimal assembly required for catalysis. Complex I functions in the transfer of electrons from NADH to the respiratory chain. The immediate electron acceptor for the enzyme is believed to be ubiquinone. The sequence is that of NADH-ubiquinone oxidoreductase chain 4 (ND4) from Marchantia polymorpha (Common liverwort).